A 257-amino-acid polypeptide reads, in one-letter code: Imidazole glycerol phosphate synthase subunit HisF (257 aa).

Active-site residues include D11 and D130.

The protein belongs to the HisA/HisF family. In terms of assembly, heterodimer of HisH and HisF.

It is found in the cytoplasm. It catalyses the reaction 5-[(5-phospho-1-deoxy-D-ribulos-1-ylimino)methylamino]-1-(5-phospho-beta-D-ribosyl)imidazole-4-carboxamide + L-glutamine = D-erythro-1-(imidazol-4-yl)glycerol 3-phosphate + 5-amino-1-(5-phospho-beta-D-ribosyl)imidazole-4-carboxamide + L-glutamate + H(+). It participates in amino-acid biosynthesis; L-histidine biosynthesis; L-histidine from 5-phospho-alpha-D-ribose 1-diphosphate: step 5/9. IGPS catalyzes the conversion of PRFAR and glutamine to IGP, AICAR and glutamate. The HisF subunit catalyzes the cyclization activity that produces IGP and AICAR from PRFAR using the ammonia provided by the HisH subunit. The chain is Imidazole glycerol phosphate synthase subunit HisF from Shewanella baltica (strain OS223).